The sequence spans 346 residues: Protein FAF1 (346 aa).

Disordered regions lie at residues 22–120 (QFGS…LRSG) and 323–346 (KRDI…KSRR). Basic and acidic residues predominate over residues 31 to 65 (FEDKTKNIRTEVDTRDSSGDEIDNSDHGSDFKDGT). Residues 72 to 85 (SDEDSGNETAEENN) are compositionally biased toward acidic residues.

As to quaternary structure, interacts with KRR1.

It is found in the nucleus. It localises to the nucleolus. Functionally, required for pre-rRNA processing and 40S ribosomal subunit assembly. Seems to act in the processing of 35S rRNA at the A(0), A(1), and A(2) cleavage sites. The protein is Protein FAF1 (FAF1) of Saccharomyces cerevisiae (strain ATCC 204508 / S288c) (Baker's yeast).